Consider the following 722-residue polypeptide: Disintegrin and metalloproteinase domain-containing protein 21 (722 aa).

The signal sequence occupies residues 1-31 (MAVDGTLVYIRVTLLLLWLGVFLSISGYCQA). Residues 32-196 (GPSQHFTSPE…FEEAENSALE (165 aa)) constitute a propeptide that is removed on maturation. Asparagine 164 carries an N-linked (GlcNAc...) asparagine glycan. The Cysteine switch motif lies at 171-178 (MRCGLTEK). Cysteine 173 contacts Zn(2+). The Extracellular segment spans residues 197 to 681 (PKSAGDWWTH…DSGPASAKRG (485 aa)). One can recognise a Peptidase M12B domain in the interval 208–398 (WFLELVVVVN…NQGSCLHNPP (191 aa)). Asparagine 227 carries an N-linked (GlcNAc...) asparagine glycan. Disulfide bonds link cysteine 316/cysteine 393, cysteine 356/cysteine 378, and cysteine 358/cysteine 363. Histidine 341 provides a ligand contact to Zn(2+). Residue glutamate 342 is part of the active site. Positions 345 and 351 each coordinate Zn(2+). Asparagine 377, asparagine 437, asparagine 478, asparagine 546, and asparagine 600 each carry an N-linked (GlcNAc...) asparagine glycan. Residues 406-492 (LKRCGNGVVE…QCPEDRYVQD (87 aa)) form the Disintegrin domain. Cysteines 464 and 484 form a disulfide. 3 disulfides stabilise this stretch: cysteine 634–cysteine 645, cysteine 639–cysteine 651, and cysteine 653–cysteine 662. In terms of domain architecture, EGF-like spans 634–663 (CLPETCNMKGICNNKHHCHCGYGWSPPYCQ). A helical membrane pass occupies residues 682 to 702 (VFLPLIVIPSLSVLTFLFTVG). Residues 703–722 (LLMYLRQCSGPKETKAHSSG) lie on the Cytoplasmic side of the membrane.

Zn(2+) is required as a cofactor. Post-translationally, has no obvious cleavage site for furin endopeptidase, suggesting that the proteolytic processing is regulated.

The protein localises to the membrane. Its function is as follows. May be involved in sperm maturation and/or fertilization. May also be involved in epithelia functions associated with establishing and maintaining gradients of ions or nutrients. The sequence is that of Disintegrin and metalloproteinase domain-containing protein 21 (ADAM21) from Homo sapiens (Human).